A 202-amino-acid chain; its full sequence is Holliday junction resolvase RecU (202 aa).

Mg(2+) is bound by residues T85, D87, E100, and Q119.

Belongs to the RecU family. Requires Mg(2+) as cofactor.

The protein resides in the cytoplasm. The enzyme catalyses Endonucleolytic cleavage at a junction such as a reciprocal single-stranded crossover between two homologous DNA duplexes (Holliday junction).. In terms of biological role, endonuclease that resolves Holliday junction intermediates in genetic recombination. Cleaves mobile four-strand junctions by introducing symmetrical nicks in paired strands. Promotes annealing of linear ssDNA with homologous dsDNA. Required for DNA repair, homologous recombination and chromosome segregation. The chain is Holliday junction resolvase RecU from Streptococcus equi subsp. equi (strain 4047).